We begin with the raw amino-acid sequence, 513 residues long: Glutamate--tRNA ligase 2 (513 aa).

A 'HIGH' region motif is present at residues 11–21 (PSPTGFLHIGS). The 'KMSKS' region motif lies at 240–244 (KLSKR). An ATP-binding site is contributed by lysine 243. One can recognise an RPE1 insert domain in the interval 335 to 383 (NTLLRHLPYREEFGGNTERSTAAYIDIREDASTGLTYKLPLAVELPKKF).

The protein belongs to the class-I aminoacyl-tRNA synthetase family. Glutamate--tRNA ligase type 1 subfamily. As to quaternary structure, monomer.

It is found in the cytoplasm. It carries out the reaction tRNA(Glu) + L-glutamate + ATP = L-glutamyl-tRNA(Glu) + AMP + diphosphate. Functionally, catalyzes the attachment of glutamate to tRNA(Glu) in a two-step reaction: glutamate is first activated by ATP to form Glu-AMP and then transferred to the acceptor end of tRNA(Glu). The protein is Glutamate--tRNA ligase 2 of Rickettsia conorii (strain ATCC VR-613 / Malish 7).